Here is a 167-residue protein sequence, read N- to C-terminus: Small ribosomal subunit protein uS5 (167 aa).

Positions 12 to 75 (LQEKLVQVNR…EAARRNMIQV (64 aa)) constitute an S5 DRBM domain.

It belongs to the universal ribosomal protein uS5 family. Part of the 30S ribosomal subunit. Contacts proteins S4 and S8.

Its function is as follows. With S4 and S12 plays an important role in translational accuracy. Located at the back of the 30S subunit body where it stabilizes the conformation of the head with respect to the body. This Alcanivorax borkumensis (strain ATCC 700651 / DSM 11573 / NCIMB 13689 / SK2) protein is Small ribosomal subunit protein uS5.